The chain runs to 180 residues: Large ribosomal subunit protein uL6 (180 aa).

Belongs to the universal ribosomal protein uL6 family. Part of the 50S ribosomal subunit.

Functionally, this protein binds to the 23S rRNA, and is important in its secondary structure. It is located near the subunit interface in the base of the L7/L12 stalk, and near the tRNA binding site of the peptidyltransferase center. This is Large ribosomal subunit protein uL6 from Anaeromyxobacter sp. (strain Fw109-5).